Here is a 235-residue protein sequence, read N- to C-terminus: Elongation factor Tu, chloroplastic (235 aa).

Residues 1-125 (KNMITGAAQM…AVDEYIPTPV (125 aa)) form the tr-type G domain. 47-50 (NKQD) provides a ligand contact to GTP.

It belongs to the TRAFAC class translation factor GTPase superfamily. Classic translation factor GTPase family. EF-Tu/EF-1A subfamily.

The protein localises to the plastid. It is found in the chloroplast. It catalyses the reaction GTP + H2O = GDP + phosphate + H(+). In terms of biological role, GTP hydrolase that promotes the GTP-dependent binding of aminoacyl-tRNA to the A-site of ribosomes during protein biosynthesis. In Gracilariopsis lemaneiformis (Red alga), this protein is Elongation factor Tu, chloroplastic (tufA).